We begin with the raw amino-acid sequence, 1014 residues long: MPASAPPRRPRPPPPSLSLSLLLVLLGLAGRRLRAEPGDGAQTWARFARPPAPEAAGLFQGTFPDGFLWAVGSAAYQTEGGWQQHGKGASIWDTFTHHPLAPPGDSRIANVPSGAPSPLQPATGDVASDSYNNVFRDTEALRELGVTHYRFSISWARVLPNGSAGVPNREGLRYYRRLLERLRELGVQPVVTLYHWDLPQRLQDAYGGWANRALADHFRDYAELCFRHFGGQVKYWITIDNPYVVAWHGYATGRLAPGIRGSPRLGYLVAHNLLLAHAKVWHLYNTSFRPTQGGQVSIALSSHWINPRRMTDHSIKECQKSLDFVLGWFAKPIFIDGDYPESMKNNLSSLLPDFTESEKKFIKGTADFFALSFGPTLSFQLLDPHMKFRQLESPSLRQLLSWIDLEYNHPQIFIVENGWFVSGTTKRDDAKYMYYLKKFIMETLKAIKLDGVDVIGYTAWSLMDGFEWHRGYSIRRGLFYVDFLSQEKTLLPKSSALFYQKLIEKNGFPPLPENQPLEGTFPCDFAWGIVDNYIQVDTTLSQFTDLNVYLWDVHHSKRLIKVDGVVTKKRKSYCVDFAAIQPQITLLQEMHVTHFRFSLDWALILPLGNQSQVNHTILQYYRCMVSELVRVNITPVVALWQPVAPNQGLPRLLARQGAWENPYTALAFAEYARLCFQELGHHVKLWITMNEPYTRNMTYSAGHNLLKAHALAWHVYNEKFRHAQNGKISIALQADWIEPACPFSQKDKEVAERVLEFDIGWLAEPIFGSGDYPWVMRDWLNQRNNFLLPYFTEDEKKLIQGTFDFLALSHYTTILVDSEKEDPIKYNDYLEVQEMTDITWLNSPSQVAVVPWGLRKVLNWLKFKYGDLPMYIISNGIDDGLHAEDDQLRVYYMQNYINEALKAHILDGINLCGYFAYSFNDRTAPRFGLYRFAADQFEPKPSMKHYRKIIDSNGFPGPETLEKFCPEEFTVCTECSFFHTRKPLVAFIAFLFFAFIVSLSLIFYYSKKGRRRYQ.

Residues 1–35 (MPASAPPRRPRPPPPSLSLSLLLVLLGLAGRRLRA) form the signal peptide. Over 36–983 (EPGDGAQTWA…ECSFFHTRKP (948 aa)) the chain is Extracellular. Glycosyl hydrolase-1 stretches follow at residues 59–508 (FQGT…KNGF) and 517–955 (LEGT…SNGF). Residues asparagine 161, asparagine 285, asparagine 346, asparagine 609, asparagine 614, and asparagine 696 are each glycosylated (N-linked (GlcNAc...) asparagine). Residues 984–1004 (LVAFIAFLFFAFIVSLSLIFY) form a helical membrane-spanning segment. At 1005–1014 (YSKKGRRRYQ) the chain is on the cytoplasmic side.

It belongs to the glycosyl hydrolase 1 family. Klotho subfamily. Homodimer. Interacts with FGF23 and FGFR1.

The protein resides in the cell membrane. The protein localises to the apical cell membrane. Its subcellular location is the secreted. It catalyses the reaction a beta-D-glucuronoside + H2O = D-glucuronate + an alcohol. Its function is as follows. May have weak glycosidase activity towards glucuronylated steroids. However, it lacks essential active site Glu residues at positions 241 and 874, suggesting it may be inactive as a glycosidase in vivo. May be involved in the regulation of calcium and phosphorus homeostasis by inhibiting the synthesis of active vitamin D. Essential factor for the specific interaction between FGF23 and FGFR1. Functionally, the Klotho peptide generated by cleavage of the membrane-bound isoform may be an anti-aging circulating hormone which would extend life span by inhibiting insulin/IGF1 signaling. In Macaca fascicularis (Crab-eating macaque), this protein is Klotho (KL).